The sequence spans 457 residues: Glutamate--tRNA ligase 2 (457 aa).

The 'HIGH' region motif lies at 9-19; sequence PSPTGRIHIGN. The 'KMSKS' region signature appears at 250 to 254; sequence GLSKR. An ATP-binding site is contributed by Lys253.

The protein belongs to the class-I aminoacyl-tRNA synthetase family. Glutamate--tRNA ligase type 1 subfamily. As to quaternary structure, monomer.

Its subcellular location is the cytoplasm. It carries out the reaction tRNA(Glu) + L-glutamate + ATP = L-glutamyl-tRNA(Glu) + AMP + diphosphate. Functionally, catalyzes the attachment of glutamate to tRNA(Glu) in a two-step reaction: glutamate is first activated by ATP to form Glu-AMP and then transferred to the acceptor end of tRNA(Glu). The sequence is that of Glutamate--tRNA ligase 2 from Mesorhizobium japonicum (strain LMG 29417 / CECT 9101 / MAFF 303099) (Mesorhizobium loti (strain MAFF 303099)).